Consider the following 387-residue polypeptide: uncharacterized protein (387 aa).

Its subcellular location is the mitochondrion. This is an uncharacterized protein from Paramecium tetraurelia.